The primary structure comprises 141 residues: MDDSQWVSIHIRDRLAQGNITIRESFLYEGQFHSPEDEKKALTEDDIDQLIIPSEGIGEVCARGRRGSEGWMDLFDGEKKICELHWDNRTKRPSNEFEVIDGDKDYKIECSGWSPQAGPLGHVFIDISAAKKKAAAAAAAK.

This sequence belongs to the aegerolysin family.

The protein localises to the cytoplasm. Hemolysins are potential virulence factors. Has hemolytic activity against sheep erythrocytes in vitro. This is Terrelysin from Aspergillus terreus (strain NIH 2624 / FGSC A1156).